The chain runs to 802 residues: Chondroitin sulfate synthase 1 (802 aa).

The Cytoplasmic segment spans residues 1–7 (MAARGRR). The helical; Signal-anchor for type II membrane protein transmembrane segment at 8 to 28 (AWLSVLLGLVLGFVLASRLVL) threads the bilayer. The Lumenal segment spans residues 29–802 (PRASELKRAG…SNNNGSVRTA (774 aa)). Residues 34-82 (LKRAGPRRRASPEGCRSGQAAASQAGGARGDARGAQLWPPGSDPDGGPR) are disordered. Composition is skewed to low complexity over residues 49 to 59 (RSGQAAASQAG) and 66 to 78 (RGAQ…SDPD). N-linked (GlcNAc...) asparagine glycans are attached at residues Asn189 and Asn623. 2 residues coordinate a divalent metal cation: Asp633 and His747. N-linked (GlcNAc...) asparagine glycosylation occurs at Asn796.

Belongs to the chondroitin N-acetylgalactosaminyltransferase family. Requires Co(2+) as cofactor. The cofactor is Mn(2+). Cd(2+) serves as cofactor. As to expression, ubiquitous, with the highest levels in placenta. Detected at low levels in brain, heart, skeletal muscle, colon, thymus, spleen, kidney, liver, adrenal gland, mammary gland, stomach, small intestine, lung and peripheral blood leukocytes.

It localises to the golgi apparatus. It is found in the golgi stack membrane. The protein resides in the secreted. The enzyme catalyses 3-O-(beta-D-GlcA-(1-&gt;3)-beta-D-GalNAc-(1-&gt;4)-beta-D-GlcA-(1-&gt;3)-beta-D-Gal-(1-&gt;3)-beta-D-Gal-(1-&gt;4)-beta-D-Xyl)-L-seryl-[protein] + UDP-N-acetyl-alpha-D-galactosamine = 3-O-(beta-D-GalNAc-(1-&gt;4)-beta-D-GlcA-(1-&gt;3)-beta-D-GalNAc-(1-&gt;4)-beta-D-GlcA-(1-&gt;3)-beta-D-Gal-(1-&gt;3)-beta-D-Gal-(1-&gt;4)-beta-D-Xyl)-L-seryl-[protein] + UDP + H(+). The catalysed reaction is 3-O-{beta-D-GlcA-(1-&gt;3)-[beta-D-GalNAc-(1-&gt;4)-beta-D-GlcA-(1-&gt;3)](n)-beta-D-GalNAc-(1-&gt;4)-beta-D-GlcA-(1-&gt;3)-beta-D-Gal-(1-&gt;3)-beta-D-Gal-(1-&gt;4)-beta-D-Xyl}-L-seryl-[protein] + UDP-N-acetyl-alpha-D-galactosamine = 3-O-{[beta-D-GalNAc-(1-&gt;4)-beta-D-GlcA-(1-&gt;3)](n+1)-beta-D-GalNAc-(1-&gt;4)-beta-D-GlcA-(1-&gt;3)-beta-D-Gal-(1-&gt;3)-beta-D-Gal-(1-&gt;4)-beta-D-Xyl}-L-seryl-[protein] + UDP + H(+). It carries out the reaction 3-O-(beta-D-GalNAc-(1-&gt;4)-beta-D-GlcA-(1-&gt;3)-beta-D-Gal-(1-&gt;3)-beta-D-Gal-(1-&gt;4)-beta-D-Xyl)-L-seryl-[protein] + UDP-alpha-D-glucuronate = 3-O-(beta-D-GlcA-(1-&gt;3)-beta-D-GalNAc-(1-&gt;4)-beta-D-GlcA-(1-&gt;3)-beta-D-Gal-(1-&gt;3)-beta-D-Gal-(1-&gt;4)-beta-D-Xyl)-L-seryl-[protein] + UDP + H(+). It catalyses the reaction 3-O-{[beta-D-GalNAc-(1-&gt;4)-beta-D-GlcA-(1-&gt;3)](n)-beta-D-GalNAc-(1-&gt;4)-beta-D-GlcA-(1-&gt;3)-beta-D-Gal-(1-&gt;3)-beta-D-Gal-(1-&gt;4)-beta-D-Xyl}-L-seryl-[protein] + UDP-alpha-D-glucuronate = 3-O-{beta-D-GlcA-(1-&gt;3)-[beta-D-GalNAc-(1-&gt;4)-beta-D-GlcA-(1-&gt;3)](n)-beta-D-GalNAc-(1-&gt;4)-beta-D-GlcA-(1-&gt;3)-beta-D-Gal-(1-&gt;3)-beta-D-Gal-(1-&gt;4)-beta-D-Xyl}-L-seryl-[protein] + UDP + H(+). In terms of biological role, has both beta-1,3-glucuronic acid and beta-1,4-N-acetylgalactosamine transferase activity. Transfers glucuronic acid (GlcUA) from UDP-GlcUA and N-acetylgalactosamine (GalNAc) from UDP-GalNAc to the non-reducing end of the elongating chondroitin polymer. Involved in the negative control of osteogenesis likely through the modulation of NOTCH signaling. The sequence is that of Chondroitin sulfate synthase 1 from Homo sapiens (Human).